The chain runs to 283 residues: Undecaprenyl-diphosphatase (283 aa).

Transmembrane regions (helical) follow at residues 4–24, 45–65, 91–111, 118–138, 153–173, 194–214, 228–248, and 258–278; these read LLIL…FLPI, ADLF…YEYW, QLGL…FTLA, LFNP…IFYV, VSLK…IPGT, AEFS…LDLL, ILGV…RWLV, and IFAW…WIFG.

The protein belongs to the UppP family.

Its subcellular location is the cell inner membrane. It catalyses the reaction di-trans,octa-cis-undecaprenyl diphosphate + H2O = di-trans,octa-cis-undecaprenyl phosphate + phosphate + H(+). Catalyzes the dephosphorylation of undecaprenyl diphosphate (UPP). Confers resistance to bacitracin. The chain is Undecaprenyl-diphosphatase from Psychrobacter sp. (strain PRwf-1).